Here is a 426-residue protein sequence, read N- to C-terminus: Dihydroorotase (426 aa).

The Zn(2+) site is built by histidine 58 and histidine 60. Residues histidine 60 to arginine 62 and asparagine 92 each bind substrate. Aspartate 150, histidine 177, and histidine 230 together coordinate Zn(2+). Asparagine 276 is a binding site for substrate. Aspartate 303 is a Zn(2+) binding site. The active site involves aspartate 303. Histidine 307 serves as a coordination point for substrate.

Belongs to the metallo-dependent hydrolases superfamily. DHOase family. Class I DHOase subfamily. Zn(2+) is required as a cofactor.

The catalysed reaction is (S)-dihydroorotate + H2O = N-carbamoyl-L-aspartate + H(+). It functions in the pathway pyrimidine metabolism; UMP biosynthesis via de novo pathway; (S)-dihydroorotate from bicarbonate: step 3/3. Catalyzes the reversible cyclization of carbamoyl aspartate to dihydroorotate. This Acetivibrio thermocellus (strain ATCC 27405 / DSM 1237 / JCM 9322 / NBRC 103400 / NCIMB 10682 / NRRL B-4536 / VPI 7372) (Clostridium thermocellum) protein is Dihydroorotase.